A 230-amino-acid chain; its full sequence is Aspartate and serine-rich protein (230 aa).

N-linked (GlcNAc...) asparagine glycans are attached at residues asparagine 17, asparagine 132, and asparagine 139. The interval 112-230 (LNGGATAGGV…DSDSNDTDSD (119 aa)) is disordered. Positions 126–140 (DTDESSNDTDEDSND) are enriched in acidic residues. Residues 141 to 161 (SDSKDTDSDSKDTDSDSKDSD) are compositionally biased toward basic and acidic residues. N-linked (GlcNAc...) asparagine glycans are attached at residues asparagine 163 and asparagine 170. Positions 173–223 (DSKDTDSDSKDSDSKDTDSDSKDTDSDSKDSDSKDTDSDSKDTDSDSKDSD) are enriched in basic and acidic residues. A glycan (N-linked (GlcNAc...) asparagine) is linked at asparagine 225.

As to expression, component of the acid-insoluble organic matrix of calcified layers of the shell (at protein level).

Its subcellular location is the secreted. The chain is Aspartate and serine-rich protein from Lottia gigantea (Giant owl limpet).